The sequence spans 371 residues: MSYILAEALNFVRRGISHLNYWGASHSLSADNYWESNFQGFPRLLSDSSKAPSTIRTVQVLEDDVDDIAIQYNKIVRGPLDYLLAIPGKDIRSKLIDSFNIWLQLPEEKLSIVKDIINLLHTASLLIDDIQDASRLRRGKPVAHDVYGVAQTINSANYAYYLQQARLKEIGDPRAFEIFTRSLLDLHLGQGMDLYWRDMVVCPTEEEYTRMVMYKTGGLFNLALDLMRIQSRKNTDFSKLVELLGVIFQIRDDYMNLQSGLYAEKKGLMEDLTEGKFSYPIIHSIRASPESSELLDILKQRTEDEAVKIRAVKIMESTGSFQYTRETLSRLSAEARGYVKKLETSLGPNPGIHKILDLLEVEYPTNEKGRV.

3 residues coordinate isopentenyl diphosphate: lysine 89, arginine 92, and histidine 121. Mg(2+)-binding residues include aspartate 128 and aspartate 132. Residue arginine 137 participates in dimethylallyl diphosphate binding. Position 138 (arginine 138) interacts with isopentenyl diphosphate. Dimethylallyl diphosphate-binding residues include lysine 215, threonine 216, and glutamine 249. Aspartate 252 is a binding site for Mg(2+). 3 residues coordinate dimethylallyl diphosphate: asparagine 256, lysine 266, and lysine 276. Residues 369-371 (GRV) carry the Peroxisomal targeting signal motif.

The protein belongs to the FPP/GGPP synthase family. The cofactor is Mg(2+).

It localises to the peroxisome. The enzyme catalyses isopentenyl diphosphate + dimethylallyl diphosphate = (2E)-geranyl diphosphate + diphosphate. It catalyses the reaction isopentenyl diphosphate + (2E)-geranyl diphosphate = (2E,6E)-farnesyl diphosphate + diphosphate. The catalysed reaction is isopentenyl diphosphate + (2E,6E)-farnesyl diphosphate = (2E,6E,10E)-geranylgeranyl diphosphate + diphosphate. The protein operates within secondary metabolite biosynthesis. Functionally, geranylgeranyl pyrophosphate synthase; part of the gene cluster that mediates the biosynthesis of paxilline, a mycotoxin that acts as an inhibitor of mammalian maxi-K channels. PaxG, the geranylgeranyl diphosphate (GGPP) synthase is proposed to catalyze the first step in paxilline biosynthesis. Condensation of indole-3-glycerol phosphate with GGPP by paxC then forms 3-geranylgeranylindole (3-GGI), followed by epoxidation and cyclization of this intermediate (by paxM and paxB) to form paspaline. Paspaline is subsequently converted to 13-desoxypaxilline by paxP, the latter being then converted to paxilline by paxQ. Finally paxilline can be mono- and di-prenylated by paxD. In Penicillium paxilli, this protein is Geranylgeranyl pyrophosphate synthase paxG.